Here is a 499-residue protein sequence, read N- to C-terminus: NADH-quinone oxidoreductase subunit N (499 aa).

14 helical membrane-spanning segments follow: residues 16–36, 42–62, 77–97, 109–129, 133–153, 167–187, 208–228, 252–272, 274–294, 302–322, 327–347, 376–396, 411–433, and 463–483; these read AAFS…LDAF, AIPW…ITHL, GGFV…TILL, YGEV…LGSA, VSIF…TGFI, FLLG…MYGA, LLFW…VSAA, ATKA…VPGG, WQLS…VMAL, LLAY…SAGT, AGAL…FGVM, GSTM…GGFI, TWLV…RVVY, and GTLV…GGVL.

The protein belongs to the complex I subunit 2 family. NDH-1 is composed of 14 different subunits. Subunits NuoA, H, J, K, L, M, N constitute the membrane sector of the complex.

The protein resides in the cell inner membrane. It catalyses the reaction a quinone + NADH + 5 H(+)(in) = a quinol + NAD(+) + 4 H(+)(out). Functionally, NDH-1 shuttles electrons from NADH, via FMN and iron-sulfur (Fe-S) centers, to quinones in the respiratory chain. The immediate electron acceptor for the enzyme in this species is believed to be a menaquinone. Couples the redox reaction to proton translocation (for every two electrons transferred, four hydrogen ions are translocated across the cytoplasmic membrane), and thus conserves the redox energy in a proton gradient. In Salinibacter ruber (strain DSM 13855 / M31), this protein is NADH-quinone oxidoreductase subunit N.